Here is a 116-residue protein sequence, read N- to C-terminus: Ribosome-binding factor A (116 aa).

Belongs to the RbfA family. In terms of assembly, monomer. Binds 30S ribosomal subunits, but not 50S ribosomal subunits or 70S ribosomes.

The protein localises to the cytoplasm. Its function is as follows. One of several proteins that assist in the late maturation steps of the functional core of the 30S ribosomal subunit. Associates with free 30S ribosomal subunits (but not with 30S subunits that are part of 70S ribosomes or polysomes). Required for efficient processing of 16S rRNA. May interact with the 5'-terminal helix region of 16S rRNA. In Staphylococcus aureus (strain JH9), this protein is Ribosome-binding factor A.